Consider the following 421-residue polypeptide: Bifunctional NAD biosynthesis protein NadR (421 aa).

Positions 57 to 224 (EKKVGVIFGK…KFIPKEARPF (168 aa)) are nicotinamide mononucleotide adenylyltransferase. Residues 64–67 (FGKF), H71, R98, 139–152 (EDGI…WQSW), 172–174 (SSE), 199–201 (FNV), 254–256 (SAW), and 289–292 (YIDY) contribute to the NAD(+) site. Residues 225-421 (FAKTVAILGG…TTFPIKGTSQ (197 aa)) are ribosylnicotinamide kinase.

This sequence in the N-terminal section; belongs to the bacterial NMN adenylyltransferase family. It in the C-terminal section; belongs to the bacterial RNK family. As to quaternary structure, homotetramer.

It localises to the cell membrane. The protein localises to the cytoplasm. The enzyme catalyses beta-nicotinamide D-ribonucleotide + ATP + H(+) = diphosphate + NAD(+). It catalyses the reaction beta-nicotinamide D-riboside + ATP = beta-nicotinamide D-ribonucleotide + ADP + H(+). It functions in the pathway cofactor biosynthesis; NAD(+) biosynthesis [regulation]. Its pathway is cofactor biosynthesis; NAD(+) biosynthesis; NAD(+) from nicotinamide D-ribonucleotide: step 1/1. Feed-back regulated by NAD. At high levels of NAD the RN kinase activity is inhibited. Functionally, this enzyme has two activities: nicotinamide mononucleotide (NMN) adenylyltransferase and ribosylnicotinamide (RN) kinase. The RN kinase activity catalyzes the phosphorylation of RN to form nicotinamide ribonucleotide. The NMN adenylyltransferase activity catalyzes the transfer of the AMP moiety of ATP to nicotinamide ribonucleotide to form NAD(+). This is Bifunctional NAD biosynthesis protein NadR (nadR) from Haemophilus influenzae (strain ATCC 51907 / DSM 11121 / KW20 / Rd).